Consider the following 776-residue polypeptide: Endonuclease MutS2 (776 aa).

328–335 (GPNTGGKT) lines the ATP pocket. In terms of domain architecture, Smr spans 701–776 (LDLRGKRYEE…GSGATIVTFK (76 aa)).

It belongs to the DNA mismatch repair MutS family. MutS2 subfamily. As to quaternary structure, homodimer. Binds to stalled ribosomes, contacting rRNA.

Endonuclease that is involved in the suppression of homologous recombination and thus may have a key role in the control of bacterial genetic diversity. Functionally, acts as a ribosome collision sensor, splitting the ribosome into its 2 subunits. Detects stalled/collided 70S ribosomes which it binds and splits by an ATP-hydrolysis driven conformational change. Acts upstream of the ribosome quality control system (RQC), a ribosome-associated complex that mediates the extraction of incompletely synthesized nascent chains from stalled ribosomes and their subsequent degradation. Probably generates substrates for RQC. This Streptococcus mutans serotype c (strain ATCC 700610 / UA159) protein is Endonuclease MutS2.